The chain runs to 369 residues: UPF0284 protein AM1_5137 (369 aa).

It belongs to the UPF0284 family.

The polypeptide is UPF0284 protein AM1_5137 (Acaryochloris marina (strain MBIC 11017)).